The sequence spans 323 residues: E3 ubiquitin-protein ligase makorin (323 aa).

C3H1-type zinc fingers lie at residues 1–28 (MSDR…HDSK) and 29–56 (DPPN…HVRA). Over residues 62-74 (LSSDSESLDRSIS) the composition is skewed to low complexity. Residues 62 to 92 (LSSDSESLDRSISTTPSRHLQQQGDNNDGDK) form a disordered region. A compositionally biased stretch (polar residues) spans 75-87 (TTPSRHLQQQGDN). The C3H1-type 3 zinc-finger motif lies at 101–128 (PREYPICSFAAAGDCPRGNQCPHMHGDL). The tract at residues 129 to 158 (CNTCGKKCLHPFRPEEREEHTKECEKKQKH) is makorin-type Cys-His. Residues 170–228 (CSVCLDRILSKATPGERKFGLLTECDHPFCIQCIRNWRSSAPVSGMDVNSTLRACPICR) form an RING-type zinc finger. The C3H1-type 4 zinc-finger motif lies at 257-286 (KLRSIDCKHFNFGNGNCPFGASCFYKHAYS).

It catalyses the reaction S-ubiquitinyl-[E2 ubiquitin-conjugating enzyme]-L-cysteine + [acceptor protein]-L-lysine = [E2 ubiquitin-conjugating enzyme]-L-cysteine + N(6)-ubiquitinyl-[acceptor protein]-L-lysine.. It participates in protein modification; protein ubiquitination. Functionally, E3 ubiquitin ligase catalyzing the covalent attachment of ubiquitin moieties onto substrate proteins. The protein is E3 ubiquitin-protein ligase makorin (MKRN) of Arabidopsis thaliana (Mouse-ear cress).